The following is a 147-amino-acid chain: Hemoglobin subunit delta (147 aa).

Val-2 carries the post-translational modification N-acetylalanine; in variant Niigata. The Globin domain occupies His-3 to His-147. Residue Ser-51 is modified to Phosphoserine. Residues His-64 and His-93 each contribute to the heme b site.

This sequence belongs to the globin family. Heterotetramer of two alpha chains and two delta chains in adult hemoglobin A2 (HbA2). HbA2 represents less than 3.5% of adult hemoglobin. As to expression, red blood cells.

Its function is as follows. Involved in oxygen transport from the lung to the various peripheral tissues. This is Hemoglobin subunit delta (HBD) from Homo sapiens (Human).